A 314-amino-acid chain; its full sequence is RNA 2'-O-methyltransferase FBLL1 (314 aa).

Residues 1-59 (MKPAGGRGGWGWGGGKGGSKGGDTGSGTKGGFGARTRGSSGGGRGRGRGGGGGGGGGGG) show a composition bias toward gly residues. The disordered stretch occupies residues 1 to 82 (MKPAGGRGGW…RRKKGITVSV (82 aa)). An Omega-N-methylarginine modification is found at Arg-7. Over residues 64–77 (RGGPGKNKNRRKKG) the composition is skewed to basic residues. S-adenosyl-L-methionine is bound by residues 166 to 167 (TT), 185 to 186 (EF), 210 to 211 (DA), and 230 to 233 (DVAQ).

This sequence belongs to the methyltransferase superfamily. Fibrillarin family. As to quaternary structure, component of a box C/D small nucleolar ribonucleoprotein (snoRNP) complex composed of FBLL1, SNU13/NHP2L1, NOP56 and NOP58 and a guide snoRNA which mediates 2'-hydroxyl ribose methylation in RNAs.

The protein localises to the nucleus. The protein resides in the nucleolus. The catalysed reaction is a ribonucleotide in RNA + S-adenosyl-L-methionine = a 2'-O-methylribonucleotide in RNA + S-adenosyl-L-homocysteine + H(+). In terms of biological role, S-adenosyl-L-methionine-dependent RNA methyltransferase that catalyzes 2'-hydroxyl ribose methylation in RNAs. Functions as part of box C/D small nucleolar ribonucleoprotein (snoRNP) complexes, where guide snoRNAs ensure methylation specificity through base pairing with RNA substrates. Exhibits broad substrate specificity, methylating multiple sites on ribosomal RNAs (rRNAs) and messenger RNAs (mRNAs) depending on the guide snoRNA incorporated in the complex. Specifically expressed in brain, it regulates the expression of GAP43 by stabilizing its mRNA through methylation and thereby plays an indirect role in neuronal differentiation. The polypeptide is RNA 2'-O-methyltransferase FBLL1 (Mus musculus (Mouse)).